We begin with the raw amino-acid sequence, 664 residues long: uncharacterized protein (664 aa).

Positions 1 to 35 (MGVSVLTFHVSLFLKRILSIAFFLLSLSTLLRIVN) are cleaved as a signal peptide. Residues N101 and N138 are each glycosylated (N-linked (GlcNAc...) asparagine). Sel1-like repeat units lie at residues 141–178 (AFAN…KQGS) and 179–214 (LDAH…DHLF). N-linked (GlcNAc...) asparagine glycosylation is found at N221, N300, and N371. Sel1-like repeat units follow at residues 337 to 372 (AQSC…TKND), 373 to 409 (SNSY…MNEN), 410 to 441 (PHAL…TQKS), and 442 to 477 (VISY…EAIR). N-linked (GlcNAc...) asparagine glycans are attached at residues N454 and N537. 2 Sel1-like repeats span residues 564 to 599 (IDAI…EQSS) and 601 to 636 (GMGL…SNQN).

Belongs to the sel-1 family.

This is an uncharacterized protein from Schizosaccharomyces pombe (strain 972 / ATCC 24843) (Fission yeast).